Consider the following 438-residue polypeptide: GDP-mannose 6-dehydrogenase (438 aa).

NAD(+) contacts are provided by Tyr-10, Val-11, Asp-30, Lys-35, Thr-86, and Thr-124. GDP-alpha-D-mannuronate contacts are provided by Glu-161, Lys-210, Asn-214, His-217, Asn-225, Tyr-256, Tyr-257, Arg-259, Phe-262, and Gly-265. Residue Cys-268 is part of the active site. Residue Lys-271 coordinates NAD(+). Position 324 (Lys-324) interacts with GDP-alpha-D-mannuronate. Arg-331 contacts NAD(+).

This sequence belongs to the UDP-glucose/GDP-mannose dehydrogenase family.

The catalysed reaction is GDP-alpha-D-mannose + 2 NAD(+) + H2O = GDP-alpha-D-mannuronate + 2 NADH + 3 H(+). It participates in glycan biosynthesis; alginate biosynthesis. Functionally, catalyzes the oxidation of guanosine diphospho-D-mannose (GDP-D-mannose) to GDP-D-mannuronic acid, a precursor for alginate polymerization. The alginate layer causes a mucoid phenotype and provides a protective barrier against host immune defenses and antibiotics. In Pseudomonas savastanoi pv. phaseolicola (Pseudomonas syringae pv. phaseolicola), this protein is GDP-mannose 6-dehydrogenase (algD).